Reading from the N-terminus, the 126-residue chain is uncharacterized protein (126 aa).

The N-terminal stretch at 1–23 (MLKKLIMGFFLLILLGIAGVAVM) is a signal peptide.

This is an uncharacterized protein from Archaeoglobus fulgidus (strain ATCC 49558 / DSM 4304 / JCM 9628 / NBRC 100126 / VC-16).